We begin with the raw amino-acid sequence, 270 residues long: DNA repair protein RecO (270 aa).

It belongs to the RecO family.

Its function is as follows. Involved in DNA repair and RecF pathway recombination. This chain is DNA repair protein RecO, found in Synechococcus sp. (strain WH7803).